Consider the following 210-residue polypeptide: Ribosomal RNA large subunit methyltransferase E (210 aa).

Glycine 60, tryptophan 62, aspartate 80, aspartate 96, and aspartate 121 together coordinate S-adenosyl-L-methionine. Lysine 161 functions as the Proton acceptor in the catalytic mechanism.

It belongs to the class I-like SAM-binding methyltransferase superfamily. RNA methyltransferase RlmE family.

The protein resides in the cytoplasm. The enzyme catalyses uridine(2552) in 23S rRNA + S-adenosyl-L-methionine = 2'-O-methyluridine(2552) in 23S rRNA + S-adenosyl-L-homocysteine + H(+). Functionally, specifically methylates the uridine in position 2552 of 23S rRNA at the 2'-O position of the ribose in the fully assembled 50S ribosomal subunit. This is Ribosomal RNA large subunit methyltransferase E from Vesicomyosocius okutanii subsp. Calyptogena okutanii (strain HA).